A 262-amino-acid chain; its full sequence is Protein FLOURY 2 (262 aa).

A signal peptide spans 1-21 (MATKILALLALLALLVSATNA).

This sequence belongs to the zein family.

It is found in the endoplasmic reticulum membrane. Zeins are major seed storage proteins. The protein is Protein FLOURY 2 of Zea mays (Maize).